A 240-amino-acid chain; its full sequence is Lectin (240 aa).

Mn(2+) contacts are provided by glutamate 127 and aspartate 129. Residues aspartate 129, tyrosine 131, asparagine 133, and aspartate 138 each contribute to the Ca(2+) site. Aspartate 138 and histidine 143 together coordinate Mn(2+).

It belongs to the leguminous lectin family. In terms of assembly, heterotetramer of two alpha and two beta chains; disulfide bond linked.

In terms of biological role, binds preferentially to oligosaccharides bearing the sequence Man-alpha-1-&gt;2 Man-alpha-1-&gt;6 Man-alpha-1-&gt;6Man found in early steps of glycoprotein processing in the endoplasmic reticulum. It binds weakly to highly processed oligosaccharide structures. This chain is Lectin, found in Leucomphalos mildbraedii (Bowringia mildbraedii).